Consider the following 305-residue polypeptide: Large ribosomal subunit protein uL2m (305 aa).

The transit peptide at 1-60 directs the protein to the mitochondrion; that stretch reads MALCALTRALRSLNLAPPTVAAPAPSLFPAAQMMNNGLLQQPSALMLLPCRPVLTSVALN. A disordered region spans residues 264-283; the sequence is RWLGKRPNSGRWHRKGGWAG. Residues 274 to 283 are compositionally biased toward basic residues; that stretch reads RWHRKGGWAG.

It belongs to the universal ribosomal protein uL2 family. As to quaternary structure, component of the mitochondrial large ribosomal subunit (mt-LSU). Mature mammalian 55S mitochondrial ribosomes consist of a small (28S) and a large (39S) subunit. The 28S small subunit contains a 12S ribosomal RNA (12S mt-rRNA) and 30 different proteins. The 39S large subunit contains a 16S rRNA (16S mt-rRNA), a copy of mitochondrial valine transfer RNA (mt-tRNA(Val)), which plays an integral structural role, and 52 different proteins.

Its subcellular location is the mitochondrion. This chain is Large ribosomal subunit protein uL2m (MRPL2), found in Homo sapiens (Human).